The primary structure comprises 172 residues: MKTKELVIMALFAAIGAALHSIIPPFLGGMKPDMMLIMMFMGILLFPRVQNVLVIGIVTGIISALTTAFPAGQIPNIIDKPVSAFLFFSLFLLFRKSRKTGAAAVLTVIGTILSGIVFLSSALLIVGLPGGFAALFAAVVLPAAVLNTISMIIIYPIVQTILRRSSFMEAAK.

Transmembrane regions (helical) follow at residues 7–29 (VIMALFAAIGAALHSIIPPFLGG), 49–71 (VQNVLVIGIVTGIISALTTAFPA), 104–126 (AVLTVIGTILSGIVFLSSALLIV), and 136–158 (FAAVVLPAAVLNTISMIIIYPIV).

The protein belongs to the vitamin uptake transporter (VUT/ECF) (TC 2.A.88) family. TrpP subfamily.

It is found in the cell membrane. In terms of biological role, probably involved in tryptophan uptake. This Bacillus subtilis (strain 168) protein is Probable tryptophan transport protein (trpP).